Consider the following 249-residue polypeptide: Probable transcriptional regulatory protein HY04AAS1_0501 (249 aa).

The protein belongs to the TACO1 family.

The protein localises to the cytoplasm. The polypeptide is Probable transcriptional regulatory protein HY04AAS1_0501 (Hydrogenobaculum sp. (strain Y04AAS1)).